The following is a 119-amino-acid chain: Large ribosomal subunit protein uL24 (119 aa).

The protein belongs to the universal ribosomal protein uL24 family. In terms of assembly, part of the 50S ribosomal subunit.

One of two assembly initiator proteins, it binds directly to the 5'-end of the 23S rRNA, where it nucleates assembly of the 50S subunit. Functionally, one of the proteins that surrounds the polypeptide exit tunnel on the outside of the subunit. This is Large ribosomal subunit protein uL24 from Leifsonia xyli subsp. xyli (strain CTCB07).